A 192-amino-acid chain; its full sequence is UPF0301 protein Bmul_2524/BMULJ_00714 (192 aa).

This sequence belongs to the UPF0301 (AlgH) family.

In Burkholderia multivorans (strain ATCC 17616 / 249), this protein is UPF0301 protein Bmul_2524/BMULJ_00714.